The primary structure comprises 31 residues: Kappa-sparatoxin-Hv1c (31 aa).

Cystine bridges form between cysteine 2-cysteine 16, cysteine 9-cysteine 21, and cysteine 15-cysteine 25. Position 31 is a tryptophan amide (tryptophan 31).

In terms of tissue distribution, expressed by the venom gland.

The protein resides in the secreted. Blocks transient outward voltage-gated potassium channels in rat ventricular myocytes (thus prolonging action-potential duration) and rat Kv4.2/KCNA4 channels expressed in Xenopus oocytes. Is also a weak blocker of calcium channels in rat cerebellar granule cells. This is Kappa-sparatoxin-Hv1c from Heteropoda venatoria (Brown huntsman spider).